The sequence spans 338 residues: Glyceraldehyde-3-phosphate dehydrogenase 2 (338 aa).

Residues 13 to 14 and Gly-111 contribute to the NAD(+) site; that span reads TI. 140–142 provides a ligand contact to D-glyceraldehyde 3-phosphate; it reads SCN. Residue Cys-141 is the Nucleophile of the active site. NAD(+) is bound at residue Arg-169. Residue 195-196 participates in D-glyceraldehyde 3-phosphate binding; it reads HG. Residue Gln-300 participates in NAD(+) binding.

This sequence belongs to the glyceraldehyde-3-phosphate dehydrogenase family. In terms of assembly, homotetramer.

It is found in the cytoplasm. It carries out the reaction D-glyceraldehyde 3-phosphate + phosphate + NADP(+) = (2R)-3-phospho-glyceroyl phosphate + NADPH + H(+). The enzyme catalyses D-glyceraldehyde 3-phosphate + phosphate + NAD(+) = (2R)-3-phospho-glyceroyl phosphate + NADH + H(+). Its pathway is carbohydrate degradation; glycolysis; pyruvate from D-glyceraldehyde 3-phosphate: step 1/5. In Methanosarcina barkeri (strain Fusaro / DSM 804), this protein is Glyceraldehyde-3-phosphate dehydrogenase 2.